The chain runs to 316 residues: UDP-N-acetylenolpyruvoylglucosamine reductase (316 aa).

Positions 27 to 225 (VGGKAERFYR…KTAINALLKK (199 aa)) constitute an FAD-binding PCMH-type domain. Arg190 is a catalytic residue. Ser239 functions as the Proton donor in the catalytic mechanism. Glu309 is a catalytic residue.

Belongs to the MurB family. The cofactor is FAD.

The protein localises to the cytoplasm. It catalyses the reaction UDP-N-acetyl-alpha-D-muramate + NADP(+) = UDP-N-acetyl-3-O-(1-carboxyvinyl)-alpha-D-glucosamine + NADPH + H(+). The protein operates within cell wall biogenesis; peptidoglycan biosynthesis. Functionally, cell wall formation. The sequence is that of UDP-N-acetylenolpyruvoylglucosamine reductase from Coxiella burnetii (strain CbuK_Q154) (Coxiella burnetii (strain Q154)).